The primary structure comprises 418 residues: Tubulin alpha chain (418 aa).

GTP-binding residues include Gln-11, Glu-71, Ser-140, Gly-144, Thr-179, Asn-206, and Asn-228. Glu-71 is a Mg(2+) binding site. Glu-255 is a catalytic residue.

Belongs to the tubulin family. In terms of assembly, dimer of alpha and beta chains. A typical microtubule is a hollow water-filled tube with an outer diameter of 25 nm and an inner diameter of 15 nM. Alpha-beta heterodimers associate head-to-tail to form protofilaments running lengthwise along the microtubule wall with the beta-tubulin subunit facing the microtubule plus end conferring a structural polarity. Microtubules usually have 13 protofilaments but different protofilament numbers can be found in some organisms and specialized cells. It depends on Mg(2+) as a cofactor.

It localises to the cytoplasm. Its subcellular location is the cytoskeleton. It catalyses the reaction GTP + H2O = GDP + phosphate + H(+). Its function is as follows. Tubulin is the major constituent of microtubules, a cylinder consisting of laterally associated linear protofilaments composed of alpha- and beta-tubulin heterodimers. Microtubules grow by the addition of GTP-tubulin dimers to the microtubule end, where a stabilizing cap forms. Below the cap, tubulin dimers are in GDP-bound state, owing to GTPase activity of alpha-tubulin. In Ajellomyces capsulatus (Darling's disease fungus), this protein is Tubulin alpha chain (TUB1).